A 199-amino-acid polypeptide reads, in one-letter code: Recombination protein RecR (199 aa).

The C4-type zinc finger occupies 58–73 (CLVCGNVTGSDICPIC). Residues 81–176 (GEICVVTDVA…AVTGLAQGVP (96 aa)) form the Toprim domain.

It belongs to the RecR family.

Its function is as follows. May play a role in DNA repair. It seems to be involved in an RecBC-independent recombinational process of DNA repair. It may act with RecF and RecO. This is Recombination protein RecR from Paracoccus denitrificans (strain Pd 1222).